A 217-amino-acid chain; its full sequence is MPVKKRTPLKHKSVSFSDDITQTQHNHHHRKKQNGERPPVFIRKTWLTIPWHLIALVYIYVKVFNNYNTAELLACLVPLQILYTIFQFNKATIYGNKRLKFNYSLAAISILACIVLSIPVVVIIILFGAPLLELLWETWLLALHCSFLAYPAVYSVLNCDFKVGLWKRYFILIVVGCWISCVVIPLDWDRDWQAWPIPIVIGAYLGAFVGFAYGAYL.

A run of 2 helical transmembrane segments spans residues 45–65 (TWLT…KVFN) and 68–88 (NTAE…IFQF). Residue N102 is glycosylated (N-linked (GlcNAc...) asparagine). The next 4 membrane-spanning stretches (helical) occupy residues 107–127 (AISI…IILF), 134–154 (LLWE…PAVY), 169–189 (YFIL…LDWD), and 197–217 (IPIV…GAYL).

The protein belongs to the PIGF family.

It is found in the endoplasmic reticulum membrane. Its pathway is glycolipid biosynthesis; glycosylphosphatidylinositol-anchor biosynthesis. In terms of biological role, acts in the GPI biosynthetic pathway between GlcNAc-PI synthesis and GPI transfer to protein. This is Glycosylphosphatidylinositol anchor biosynthesis protein 11 (GPI11) from Candida glabrata (strain ATCC 2001 / BCRC 20586 / JCM 3761 / NBRC 0622 / NRRL Y-65 / CBS 138) (Yeast).